We begin with the raw amino-acid sequence, 295 residues long: MSALRQIAFYGKGGIGKSTTSQNTLAALVEMGQRILIVGCDPKADSTRLILNTKLQDTVLHLAAEAGSVEDLDVADVVKIGYKGIKCTESGGPEPGVGCAGRGVITAINFLEENGAYDDLDYVSYDVLGDVVCGGFAMPIRENKAQEIYIVMSGEMMALYAANNIAKGILKYAHTGGVRLGGLICNERQTDKEVELAEALAGRLGCRLIHFVPRDNGVQHAELRRQTVIQYAPDSKQAGEYRTLATKIHNNSGQGVVPTPITMEDLEEMLMEFGIMKSDEEALAELEAKESAAAN.

11–18 (GKGGIGKS) is a binding site for ATP. Residue Cys99 participates in [4Fe-4S] cluster binding. Arg102 is modified (ADP-ribosylarginine; by dinitrogenase reductase ADP-ribosyltransferase). Cys133 serves as a coordination point for [4Fe-4S] cluster.

Belongs to the NifH/BchL/ChlL family. As to quaternary structure, homodimer. It depends on [4Fe-4S] cluster as a cofactor. The reversible ADP-ribosylation of Arg-102 inactivates the nitrogenase reductase and regulates nitrogenase activity.

The enzyme catalyses N2 + 8 reduced [2Fe-2S]-[ferredoxin] + 16 ATP + 16 H2O = H2 + 8 oxidized [2Fe-2S]-[ferredoxin] + 2 NH4(+) + 16 ADP + 16 phosphate + 6 H(+). The key enzymatic reactions in nitrogen fixation are catalyzed by the nitrogenase complex, which has 2 components: the iron protein and the molybdenum-iron protein. The sequence is that of Nitrogenase iron protein (nifH) from Rhodospirillum rubrum.